The chain runs to 320 residues: Transaldolase (320 aa).

The Schiff-base intermediate with substrate role is filled by lysine 135.

It belongs to the transaldolase family. Type 1 subfamily. As to quaternary structure, homodimer.

Its subcellular location is the cytoplasm. The catalysed reaction is D-sedoheptulose 7-phosphate + D-glyceraldehyde 3-phosphate = D-erythrose 4-phosphate + beta-D-fructose 6-phosphate. The protein operates within carbohydrate degradation; pentose phosphate pathway; D-glyceraldehyde 3-phosphate and beta-D-fructose 6-phosphate from D-ribose 5-phosphate and D-xylulose 5-phosphate (non-oxidative stage): step 2/3. Functionally, transaldolase is important for the balance of metabolites in the pentose-phosphate pathway. In Colwellia psychrerythraea (strain 34H / ATCC BAA-681) (Vibrio psychroerythus), this protein is Transaldolase.